A 206-amino-acid polypeptide reads, in one-letter code: Protein GET1 (206 aa).

Over methionine 1 to leucine 4 the chain is Lumenal. A helical membrane pass occupies residues leucine 5 to alanine 24. The Cytoplasmic portion of the chain corresponds to threonine 25–arginine 110. Residues serine 42–lysine 99 adopt a coiled-coil conformation. The helical transmembrane segment at tryptophan 111–phenylalanine 131 threads the bilayer. Over threonine 132–threonine 155 the chain is Lumenal. A helical membrane pass occupies residues valine 156 to valine 172. Over glycine 173–glutamine 206 the chain is Cytoplasmic.

This sequence belongs to the WRB/GET1 family. As to quaternary structure, interacts with GET3.

It localises to the endoplasmic reticulum membrane. Functionally, required for the post-translational delivery of tail-anchored (TA) proteins to the endoplasmic reticulum. Acts as a membrane receptor for soluble GET3, which recognizes and selectively binds the transmembrane domain of TA proteins in the cytosol. The protein is Protein GET1 of Ajellomyces dermatitidis (strain ER-3 / ATCC MYA-2586) (Blastomyces dermatitidis).